The primary structure comprises 249 residues: MVEMNFKVDAFEGPLDLLLHLIGQLEVDIYDIPMAEITDQYMEFVHTMQEMELDVASEYLVMAATLLAIKSKMLLPKQELEIDYDTLEEEEDPRDALVEKLMEYKRFKEAAKELKEKEAERSFYFSKPPMDLAEYDDGTKVAELDVSLNDMLSAFNKMLRRKKLNKPLHTRITTQEISIDDRMNSVLGKLNQQKNHRLRFDELFEEQTKEQLVVTFLALLELMKRKLVEVEQSESFADLYVQGKGEELS.

The protein belongs to the ScpA family. In terms of assembly, component of a cohesin-like complex composed of ScpA, ScpB and the Smc homodimer, in which ScpA and ScpB bind to the head domain of Smc. The presence of the three proteins is required for the association of the complex with DNA.

Its subcellular location is the cytoplasm. Its function is as follows. Participates in chromosomal partition during cell division. May act via the formation of a condensin-like complex containing Smc and ScpB that pull DNA away from mid-cell into both cell halves. This Listeria welshimeri serovar 6b (strain ATCC 35897 / DSM 20650 / CCUG 15529 / CIP 8149 / NCTC 11857 / SLCC 5334 / V8) protein is Segregation and condensation protein A.